The chain runs to 91 residues: Putative membrane protein insertion efficiency factor (91 aa).

This sequence belongs to the UPF0161 family.

It localises to the cell inner membrane. In terms of biological role, could be involved in insertion of integral membrane proteins into the membrane. This is Putative membrane protein insertion efficiency factor from Saccharophagus degradans (strain 2-40 / ATCC 43961 / DSM 17024).